The sequence spans 621 residues: Probable serine/threonine-protein kinase WNK2 (621 aa).

Residues 28–286 (GRYTEVLGKG…AQELLMDPFL (259 aa)) form the Protein kinase domain. Residues 108-111 (TEVF) and lysine 158 each bind ATP. Catalysis depends on aspartate 175, which acts as the Proton acceptor. 4 disordered regions span residues 438–490 (SVEN…SDSP), 501–520 (VEPH…NDTD), 527–553 (GTSV…SPQS), and 600–621 (HREE…SDKP).

It belongs to the protein kinase superfamily. Ser/Thr protein kinase family. WNK subfamily.

It carries out the reaction L-seryl-[protein] + ATP = O-phospho-L-seryl-[protein] + ADP + H(+). It catalyses the reaction L-threonyl-[protein] + ATP = O-phospho-L-threonyl-[protein] + ADP + H(+). The chain is Probable serine/threonine-protein kinase WNK2 (WNK2) from Oryza sativa subsp. japonica (Rice).